The chain runs to 177 residues: Alkyl hydroperoxide reductase AhpD (177 aa).

Residue C130 is the Proton donor of the active site. The cysteines at positions 130 and 133 are disulfide-linked. C133 serves as the catalytic Cysteine sulfenic acid (-SOH) intermediate.

The protein belongs to the AhpD family. As to quaternary structure, homotrimer.

The catalysed reaction is N(6)-[(R)-dihydrolipoyl]-L-lysyl-[lipoyl-carrier protein] + a hydroperoxide = N(6)-[(R)-lipoyl]-L-lysyl-[lipoyl-carrier protein] + an alcohol + H2O. Functionally, antioxidant protein with alkyl hydroperoxidase activity. Required for the reduction of the AhpC active site cysteine residues and for the regeneration of the AhpC enzyme activity. This chain is Alkyl hydroperoxide reductase AhpD, found in Mycolicibacterium smegmatis (strain ATCC 700084 / mc(2)155) (Mycobacterium smegmatis).